Consider the following 119-residue polypeptide: Ribonuclease pancreatic (119 aa).

A Pyrrolidone carboxylic acid modification is found at glutamine 1. The Proton acceptor role is filled by histidine 10. Intrachain disulfides connect cysteine 25–cysteine 80, cysteine 39–cysteine 91, and cysteine 57–cysteine 106. 40–44 is a substrate binding site; the sequence is KTRNT. Histidine 113 functions as the Proton donor in the catalytic mechanism.

The protein belongs to the pancreatic ribonuclease family. As to quaternary structure, monomer. Interacts with and forms tight 1:1 complexes with RNH1. Dimerization of two such complexes may occur. Interaction with RNH1 inhibits this protein. In terms of tissue distribution, pancreas.

The protein resides in the secreted. It catalyses the reaction an [RNA] containing cytidine + H2O = an [RNA]-3'-cytidine-3'-phosphate + a 5'-hydroxy-ribonucleotide-3'-[RNA].. The catalysed reaction is an [RNA] containing uridine + H2O = an [RNA]-3'-uridine-3'-phosphate + a 5'-hydroxy-ribonucleotide-3'-[RNA].. In terms of biological role, endonuclease that catalyzes the cleavage of RNA on the 3' side of pyrimidine nucleotides. Acts on single-stranded and double-stranded RNA. This is Ribonuclease pancreatic from Iguana iguana (Common iguana).